The primary structure comprises 518 residues: Cytochrome P450 26C1 (518 aa).

A helical transmembrane segment spans residues 293-313; sequence LLFAAFFTTASASTSLILLLL. Heme is bound at residue Cys-455.

It belongs to the cytochrome P450 family. It depends on heme as a cofactor.

It localises to the membrane. It carries out the reaction an organic molecule + reduced [NADPH--hemoprotein reductase] + O2 = an alcohol + oxidized [NADPH--hemoprotein reductase] + H2O + H(+). The enzyme catalyses all-trans-retinoate + reduced [NADPH--hemoprotein reductase] + O2 = all-trans-4-hydroxyretinoate + oxidized [NADPH--hemoprotein reductase] + H2O + H(+). The catalysed reaction is all-trans-4-hydroxyretinoate + reduced [NADPH--hemoprotein reductase] + O2 = all-trans-4-oxoretinoate + oxidized [NADPH--hemoprotein reductase] + 2 H2O + H(+). It catalyses the reaction 9-cis-retinoate + reduced [NADPH--hemoprotein reductase] + O2 = 9-cis-4-hydroxyretinoate + oxidized [NADPH--hemoprotein reductase] + H2O + H(+). It carries out the reaction 9-cis-4-hydroxyretinoate + reduced [NADPH--hemoprotein reductase] + O2 = 9-cis-4-oxoretinoate + oxidized [NADPH--hemoprotein reductase] + 2 H2O + H(+). The enzyme catalyses all-trans-4-hydroxy-13,14-dihydroretinoate + reduced [NADPH--hemoprotein reductase] + O2 = all-trans-4-oxo-13,14-dihydroretinoate + oxidized [NADPH--hemoprotein reductase] + 2 H2O + H(+). The catalysed reaction is all-trans-13,14-dihydroretinoate + reduced [NADPH--hemoprotein reductase] + O2 = all-trans-4-hydroxy-13,14-dihydroretinoate + oxidized [NADPH--hemoprotein reductase] + H2O + H(+). Functionally, a cytochrome P450 monooxygenase involved in the metabolism of retinoates (RAs), the active metabolites of vitamin A, and critical signaling molecules in animals. RAs exist as at least four different isomers: all-trans-RA (atRA), 9-cis-RA, 13-cis-RA, and 9,13-dicis-RA, where atRA is considered to be the biologically active isomer, although 9-cis-RA and 13-cis-RA also have activity. Catalyzes the oxidation of atRA primarily at C-4. Oxidation of atRA limits its biological activity and initiates a degradative process leading to its eventual elimination, thereby contributes to the regulation of atRA homeostasis and signaling. Able to metabolize other RAs such as 9-cis with high efficiency. Can oxidize all-trans-13,14-dihydroretinoate (DRA) to metabolites which could include all-trans-4-oxo-DRA, all-trans-4-hydroxy-DRA, all-trans-5,8-epoxy-DRA, and all-trans-18-hydroxy-DRA. Shares sequence similarity with other CYP26 family members, but has higher affinity to 9-cis-RA and is much less sensitive to the inhibitory effects of ketoconazole. In cooperation with Cyp26a1, contributes to the CNS patterning and the development of regions of higher visual acuity. This Mus musculus (Mouse) protein is Cytochrome P450 26C1.